The sequence spans 137 residues: Ribosome-binding factor A (137 aa).

Belongs to the RbfA family. In terms of assembly, monomer. Binds 30S ribosomal subunits, but not 50S ribosomal subunits or 70S ribosomes.

It is found in the cytoplasm. Functionally, one of several proteins that assist in the late maturation steps of the functional core of the 30S ribosomal subunit. Associates with free 30S ribosomal subunits (but not with 30S subunits that are part of 70S ribosomes or polysomes). Required for efficient processing of 16S rRNA. May interact with the 5'-terminal helix region of 16S rRNA. In Erwinia tasmaniensis (strain DSM 17950 / CFBP 7177 / CIP 109463 / NCPPB 4357 / Et1/99), this protein is Ribosome-binding factor A.